The chain runs to 101 residues: Large ribosomal subunit protein eL43 (101 aa).

Residues Cys40, Cys43, Cys59, and Cys62 each coordinate Zn(2+). The segment at Cys40–Cys62 adopts a C4-type zinc-finger fold.

Belongs to the eukaryotic ribosomal protein eL43 family. Putative zinc-binding subfamily. In terms of assembly, part of the 50S ribosomal subunit. Zn(2+) serves as cofactor.

Binds to the 23S rRNA. The protein is Large ribosomal subunit protein eL43 of Pyrobaculum aerophilum (strain ATCC 51768 / DSM 7523 / JCM 9630 / CIP 104966 / NBRC 100827 / IM2).